Here is a 136-residue protein sequence, read N- to C-terminus: Holo-[acyl-carrier-protein] synthase (136 aa).

2 residues coordinate Mg(2+): D8 and E57.

Belongs to the P-Pant transferase superfamily. AcpS family. Requires Mg(2+) as cofactor.

The protein localises to the cytoplasm. The enzyme catalyses apo-[ACP] + CoA = holo-[ACP] + adenosine 3',5'-bisphosphate + H(+). Its function is as follows. Transfers the 4'-phosphopantetheine moiety from coenzyme A to a Ser of acyl-carrier-protein. The protein is Holo-[acyl-carrier-protein] synthase of Methylorubrum extorquens (strain CM4 / NCIMB 13688) (Methylobacterium extorquens).